Reading from the N-terminus, the 529-residue chain is Bifunctional purine biosynthesis protein PurH (529 aa).

Residues 1–148 (MQPPRPVRRA…KNHKDVAIVV (148 aa)) form the MGS-like domain.

This sequence belongs to the PurH family.

It catalyses the reaction (6R)-10-formyltetrahydrofolate + 5-amino-1-(5-phospho-beta-D-ribosyl)imidazole-4-carboxamide = 5-formamido-1-(5-phospho-D-ribosyl)imidazole-4-carboxamide + (6S)-5,6,7,8-tetrahydrofolate. The enzyme catalyses IMP + H2O = 5-formamido-1-(5-phospho-D-ribosyl)imidazole-4-carboxamide. The protein operates within purine metabolism; IMP biosynthesis via de novo pathway; 5-formamido-1-(5-phospho-D-ribosyl)imidazole-4-carboxamide from 5-amino-1-(5-phospho-D-ribosyl)imidazole-4-carboxamide (10-formyl THF route): step 1/1. Its pathway is purine metabolism; IMP biosynthesis via de novo pathway; IMP from 5-formamido-1-(5-phospho-D-ribosyl)imidazole-4-carboxamide: step 1/1. The protein is Bifunctional purine biosynthesis protein PurH of Sodalis glossinidius (strain morsitans).